The sequence spans 690 residues: Guanylate cyclase soluble subunit alpha-1 (690 aa).

Ser-267 carries the phosphoserine modification. The region spanning 481 to 608 (TMLFSDIVGF…NNVTLANKFE (128 aa)) is the Guanylate cyclase domain.

This sequence belongs to the adenylyl cyclase class-4/guanylyl cyclase family. The active enzyme is formed by a heterodimer of an alpha and a beta subunit. Heterodimer with GUCY1B1. Mg(2+) serves as cofactor. Mn(2+) is required as a cofactor.

Its subcellular location is the cytoplasm. It carries out the reaction GTP = 3',5'-cyclic GMP + diphosphate. Its activity is regulated as follows. Activated by nitric oxide in the presence of magnesium or manganese ions. The polypeptide is Guanylate cyclase soluble subunit alpha-1 (GUCY1A1) (Canis lupus familiaris (Dog)).